The chain runs to 172 residues: Crossover junction endodeoxyribonuclease RuvC (172 aa).

Catalysis depends on residues Asp-12, Glu-71, and Asp-143. 3 residues coordinate Mg(2+): Asp-12, Glu-71, and Asp-143.

Belongs to the RuvC family. In terms of assembly, homodimer which binds Holliday junction (HJ) DNA. The HJ becomes 2-fold symmetrical on binding to RuvC with unstacked arms; it has a different conformation from HJ DNA in complex with RuvA. In the full resolvosome a probable DNA-RuvA(4)-RuvB(12)-RuvC(2) complex forms which resolves the HJ. Requires Mg(2+) as cofactor.

It localises to the cytoplasm. It carries out the reaction Endonucleolytic cleavage at a junction such as a reciprocal single-stranded crossover between two homologous DNA duplexes (Holliday junction).. Its function is as follows. The RuvA-RuvB-RuvC complex processes Holliday junction (HJ) DNA during genetic recombination and DNA repair. Endonuclease that resolves HJ intermediates. Cleaves cruciform DNA by making single-stranded nicks across the HJ at symmetrical positions within the homologous arms, yielding a 5'-phosphate and a 3'-hydroxyl group; requires a central core of homology in the junction. The consensus cleavage sequence is 5'-(A/T)TT(C/G)-3'. Cleavage occurs on the 3'-side of the TT dinucleotide at the point of strand exchange. HJ branch migration catalyzed by RuvA-RuvB allows RuvC to scan DNA until it finds its consensus sequence, where it cleaves and resolves the cruciform DNA. The chain is Crossover junction endodeoxyribonuclease RuvC from Coxiella burnetii (strain CbuG_Q212) (Coxiella burnetii (strain Q212)).